Reading from the N-terminus, the 230-residue chain is MKLIWLGHGGFRLETGETTLLIDPWLTGNPMLEDSQHDAATQGATHILLTHAHFDHVADVLELAKHLSVPIVGQYDLMGYWGETEGVQTVGFNKGGTVTVGDTRVSMVPASHSNTFSTRDGLRTAGSEVGYMIRAEGKTLYVSGDTDIMADMDWMGDYYKPEIGILSAGGHFTMDMKAAAYAAQRYFAFKTVIPCHYRTFPLLEQSAQDLIDGLPGVNVIEPQIMKDIEL.

This sequence belongs to the UPF0173 family.

This is UPF0173 metal-dependent hydrolase TM1040_1920 from Ruegeria sp. (strain TM1040) (Silicibacter sp.).